Consider the following 466-residue polypeptide: Asparagine--tRNA ligase (466 aa).

This sequence belongs to the class-II aminoacyl-tRNA synthetase family. As to quaternary structure, homodimer.

The protein localises to the cytoplasm. It carries out the reaction tRNA(Asn) + L-asparagine + ATP = L-asparaginyl-tRNA(Asn) + AMP + diphosphate + H(+). The protein is Asparagine--tRNA ligase of Idiomarina loihiensis (strain ATCC BAA-735 / DSM 15497 / L2-TR).